The sequence spans 543 residues: Cytochrome P450 2U1 (543 aa).

A run of 4 helical transmembrane segments spans residues 32–52 (PTGG…SWLW), 58–78 (GIPP…VLLP), 261–281 (VCLN…YLPF), and 342–362 (LFYI…NSLL). Position 490 (cysteine 490) interacts with heme. The chain crosses the membrane as a helical span at residues 495–515 (LAKMELFLMFVSLMQSFTFVL).

Belongs to the cytochrome P450 family. Heme serves as cofactor.

Its subcellular location is the endoplasmic reticulum membrane. It localises to the microsome membrane. The protein localises to the mitochondrion inner membrane. The catalysed reaction is an omega-methyl-long-chain fatty acid + reduced [NADPH--hemoprotein reductase] + O2 = an omega-hydroxy-long-chain fatty acid + oxidized [NADPH--hemoprotein reductase] + H2O + H(+). The enzyme catalyses (5Z,8Z,11Z,14Z)-eicosatetraenoate + reduced [NADPH--hemoprotein reductase] + O2 = 19-hydroxy-(5Z,8Z,11Z,14Z)-eicosatetraenoate + oxidized [NADPH--hemoprotein reductase] + H2O + H(+). It carries out the reaction (5Z,8Z,11Z,14Z)-eicosatetraenoate + reduced [NADPH--hemoprotein reductase] + O2 = 20-hydroxy-(5Z,8Z,11Z,14Z)-eicosatetraenoate + oxidized [NADPH--hemoprotein reductase] + H2O + H(+). It catalyses the reaction N-[(5Z,8Z,11Z,14Z)-eicosatetraenoyl]-serotonin + reduced [NADPH--hemoprotein reductase] + O2 = 2-oxo-N-[(5Z,8Z,11Z,14Z)-eicosatetraenoyl]-serotonin + oxidized [NADPH--hemoprotein reductase] + H2O + H(+). Functionally, a cytochrome P450 monooxygenase involved in the metabolism of arachidonic acid and its conjugates. Mechanistically, uses molecular oxygen inserting one oxygen atom into a substrate, and reducing the second into a water molecule, with two electrons provided by NADPH via cytochrome P450 reductase (CPR; NADPH-ferrihemoprotein reductase). Acts as an omega and omega-1 hydroxylase for arachidonic acid and possibly for other long chain fatty acids. May modulate the arachidonic acid signaling pathway and play a role in other fatty acid signaling processes. May down-regulate the biological activities of N-arachidonoyl-serotonin, an endocannabinoid that has anti-nociceptive effects through inhibition of fatty acid amide hydrolase FAAH, TRPV1 receptor and T-type calcium channels. Catalyzes C-2 oxidation of the indole ring of N-arachidonoyl-serotonin forming a less active product 2-oxo-N-arachidonoyl-serotonin. The sequence is that of Cytochrome P450 2U1 (CYP2U1) from Bos taurus (Bovine).